The primary structure comprises 343 residues: 3-dehydroquinate synthase (343 aa).

NAD(+)-binding positions include 61-66 (SGEKYK), 95-96 (GV), 119-120 (TT), lysine 132, lysine 141, asparagine 142, and 159-162 (FLKT). Positions 174, 231, and 248 each coordinate Zn(2+).

The protein belongs to the sugar phosphate cyclases superfamily. Dehydroquinate synthase family. Homodimer. NAD(+) serves as cofactor. Requires Co(2+) as cofactor. Zn(2+) is required as a cofactor.

The protein localises to the cytoplasm. The catalysed reaction is 7-phospho-2-dehydro-3-deoxy-D-arabino-heptonate = 3-dehydroquinate + phosphate. It participates in metabolic intermediate biosynthesis; chorismate biosynthesis; chorismate from D-erythrose 4-phosphate and phosphoenolpyruvate: step 2/7. Functionally, catalyzes the conversion of 3-deoxy-D-arabino-heptulosonate 7-phosphate (DAHP) to dehydroquinate (DHQ). In Helicobacter pylori (strain ATCC 700392 / 26695) (Campylobacter pylori), this protein is 3-dehydroquinate synthase.